A 322-amino-acid chain; its full sequence is Probable arabinan endo-1,5-alpha-L-arabinosidase A (322 aa).

A signal peptide spans 1–19 (MYLPTLAASASLLVGVAHG). The active-site Proton acceptor is aspartate 34. Glutamate 201 serves as the catalytic Proton donor.

It belongs to the glycosyl hydrolase 43 family.

It localises to the secreted. It carries out the reaction Endohydrolysis of (1-&gt;5)-alpha-arabinofuranosidic linkages in (1-&gt;5)-arabinans.. The protein operates within glycan metabolism; L-arabinan degradation. Its function is as follows. Endo-1,5-alpha-L-arabinanase involved in degradation of pectin. Its preferred substrate is linear 1,5-alpha-L-arabinan. This is Probable arabinan endo-1,5-alpha-L-arabinosidase A (abnA) from Emericella nidulans (strain FGSC A4 / ATCC 38163 / CBS 112.46 / NRRL 194 / M139) (Aspergillus nidulans).